Consider the following 145-residue polypeptide: Nucleoside diphosphate kinase (145 aa).

Residues lysine 11, phenylalanine 59, arginine 87, threonine 93, arginine 104, and asparagine 114 each coordinate ATP. Histidine 117 functions as the Pros-phosphohistidine intermediate in the catalytic mechanism.

Belongs to the NDK family. Homotetramer. Mg(2+) is required as a cofactor.

It localises to the cytoplasm. The catalysed reaction is a 2'-deoxyribonucleoside 5'-diphosphate + ATP = a 2'-deoxyribonucleoside 5'-triphosphate + ADP. The enzyme catalyses a ribonucleoside 5'-diphosphate + ATP = a ribonucleoside 5'-triphosphate + ADP. Its function is as follows. Major role in the synthesis of nucleoside triphosphates other than ATP. The ATP gamma phosphate is transferred to the NDP beta phosphate via a ping-pong mechanism, using a phosphorylated active-site intermediate. The chain is Nucleoside diphosphate kinase from Myxococcus xanthus.